A 449-amino-acid chain; its full sequence is Probable protoheme IX farnesyltransferase, mitochondrial (449 aa).

Over residues 99–138 the composition is skewed to low complexity; that stretch reads TTSTTTTTNINENNIKNENNNENNNENSNNNNEQSIKSNQ. The segment at 99 to 140 is disordered; it reads TTSTTTTTNINENNIKNENNNENNNENSNNNNEQSIKSNQTK. Transmembrane regions (helical) follow at residues 163 to 183, 245 to 267, 279 to 299, 303 to 323, 352 to 372, 374 to 394, and 402 to 422; these read LTAIAGYVAACPIGAFDWVVL, MAVTPSLFVPGTLAACNVILYCW, TWIGAFVGAIPPLIGSVAATG, AIGMLLATFMYIWQIPHFLAL, SLAHALFGIPLPFIFDYFFNF, VHPITLTCMALSSASLALPFI, and LYIISLISLPITLFLSCLLRQ.

Belongs to the UbiA prenyltransferase family.

It is found in the mitochondrion membrane. Its function is as follows. Converts protoheme IX and farnesyl diphosphate to heme O. In Dictyostelium discoideum (Social amoeba), this protein is Probable protoheme IX farnesyltransferase, mitochondrial (cox10).